We begin with the raw amino-acid sequence, 349 residues long: tRNA N6-adenosine threonylcarbamoyltransferase (349 aa).

Residues His117 and His121 each contribute to the Fe cation site. Substrate is bound by residues Gln139–Gly143, Asp172, Gly185, Asp189, and Asn278. Asp310 is a Fe cation binding site.

The protein belongs to the KAE1 / TsaD family. The cofactor is Fe(2+).

It is found in the cytoplasm. It carries out the reaction L-threonylcarbamoyladenylate + adenosine(37) in tRNA = N(6)-L-threonylcarbamoyladenosine(37) in tRNA + AMP + H(+). Functionally, required for the formation of a threonylcarbamoyl group on adenosine at position 37 (t(6)A37) in tRNAs that read codons beginning with adenine. Is involved in the transfer of the threonylcarbamoyl moiety of threonylcarbamoyl-AMP (TC-AMP) to the N6 group of A37, together with TsaE and TsaB. TsaD likely plays a direct catalytic role in this reaction. The protein is tRNA N6-adenosine threonylcarbamoyltransferase of Lactobacillus acidophilus (strain ATCC 700396 / NCK56 / N2 / NCFM).